The sequence spans 527 residues: Butyrophilin subfamily 2 member A1 (527 aa).

Positions 1-28 (MESAAALHFSRPASLLLLLLSLCALVSA) are cleaved as a signal peptide. One can recognise an Ig-like V-type domain in the interval 29 to 141 (QFIVVGPTDP…SYDEAILHLV (113 aa)). At 29-248 (QFIVVGPTDP…SFMPSVSPCA (220 aa)) the chain is on the extracellular side. Residues Asn-46, Asn-114, and Asn-120 are each glycosylated (N-linked (GlcNAc...) asparagine). Residues Cys-51 and Cys-125 are joined by a disulfide bond. A helical membrane pass occupies residues 249–269 (VALPIIVVILMIPIAVCIYWI). At 270 to 527 (NKLQKEKKIL…LHRVGTHQSL (258 aa)) the chain is on the cytoplasmic side. One can recognise a B30.2/SPRY domain in the interval 310 to 506 (VKEKLQEELR…IFICPALTGA (197 aa)).

Belongs to the immunoglobulin superfamily. BTN/MOG family. Highly expressed in brain, bone marrow, small intestine, muscle, spleen and pancreas. Moderate expression was seen in lung, liver and kidney.

It is found in the membrane. The chain is Butyrophilin subfamily 2 member A1 (BTN2A1) from Homo sapiens (Human).